A 688-amino-acid polypeptide reads, in one-letter code: Translation initiation factor IF-2 (688 aa).

A disordered region spans residues 54–95; that stretch reads KEKSEKTKEEDDEIETTAKNPIKESTNNKKPNKRDDKNEKVN. A compositionally biased stretch (basic and acidic residues) spans 86 to 95; it reads KRDDKNEKVN. The tr-type G domain occupies 187-354; it reads KRSPIITVMG…MILLSSEILE (168 aa). The interval 196 to 203 is G1; sequence GHVDHGKT. A GTP-binding site is contributed by 196–203; the sequence is GHVDHGKT. Residues 221–225 are G2; it reads GITQH. Residues 242 to 245 are G3; it reads DTPG. Residues 242-246 and 296-299 contribute to the GTP site; these read DTPGH and NKID. A G4 region spans residues 296 to 299; that stretch reads NKID. Residues 332–334 are G5; it reads SAH.

It belongs to the TRAFAC class translation factor GTPase superfamily. Classic translation factor GTPase family. IF-2 subfamily.

Its subcellular location is the cytoplasm. One of the essential components for the initiation of protein synthesis. Protects formylmethionyl-tRNA from spontaneous hydrolysis and promotes its binding to the 30S ribosomal subunits. Also involved in the hydrolysis of GTP during the formation of the 70S ribosomal complex. In Clostridium botulinum (strain Okra / Type B1), this protein is Translation initiation factor IF-2.